The primary structure comprises 201 residues: Lipopolysaccharide core heptose(II)-phosphate phosphatase (201 aa).

The first 35 residues, 1 to 35 (MLAFTLRFIKNKRYLATLAGALVIIAGLTSQHAWS), serve as a signal peptide directing secretion.

The protein belongs to the phosphoglycerate mutase family. Ais subfamily.

The protein localises to the periplasm. The protein operates within bacterial outer membrane biogenesis; lipopolysaccharide metabolism. Functionally, catalyzes the dephosphorylation of heptose(II) of the outer membrane lipopolysaccharide core. The sequence is that of Lipopolysaccharide core heptose(II)-phosphate phosphatase from Salmonella paratyphi A (strain AKU_12601).